The following is a 455-amino-acid chain: Ribosomal protein uS12 methylthiotransferase RimO (455 aa).

An MTTase N-terminal domain is found at 10–126 (RKVSMISLGC…ILELIEAHDR (117 aa)). Positions 19, 55, 89, 164, 168, and 171 each coordinate [4Fe-4S] cluster. The Radical SAM core domain maps to 150 to 380 (SSPFYSTYVK…MKAQQRVSFR (231 aa)). The 69-residue stretch at 383 to 451 (RALIGRVEPV…EYDLIGEIVD (69 aa)) folds into the TRAM domain.

The protein belongs to the methylthiotransferase family. RimO subfamily. It depends on [4Fe-4S] cluster as a cofactor.

It is found in the cytoplasm. It carries out the reaction L-aspartate(89)-[ribosomal protein uS12]-hydrogen + (sulfur carrier)-SH + AH2 + 2 S-adenosyl-L-methionine = 3-methylsulfanyl-L-aspartate(89)-[ribosomal protein uS12]-hydrogen + (sulfur carrier)-H + 5'-deoxyadenosine + L-methionine + A + S-adenosyl-L-homocysteine + 2 H(+). In terms of biological role, catalyzes the methylthiolation of an aspartic acid residue of ribosomal protein uS12. In Syntrophotalea carbinolica (strain DSM 2380 / NBRC 103641 / GraBd1) (Pelobacter carbinolicus), this protein is Ribosomal protein uS12 methylthiotransferase RimO.